The chain runs to 409 residues: MKLFLRNAFKTLNPKRKLATTILPSINLILVKPFSQSTTIPKKQDRVRDHGYDNYMEVEKKIRKVVKFHSLILSQPNHTIAISLLDTLARRLGLGFKQHEPGAFLLKFPHVFEIYEHPVQRILYCRLTRKALDQIRHEHEAVLDQIPDAVTRLRKLVMMSNTGRIRLEHVRIARTEFGLPEDFEYSVILKHPQFFRLIDGEETRDKYIEIVEKDPNLSICAIERVREIEYRTKGIDAEDVRFSFVVNFPPGFKIGKYFRIAVWKWQRLPYWSPYEDISGYDLRSMEAQNRLEKRSVACIHELLSLTVEKKITLERIAHFRNVMNLPKKLKEFLLQHQGIFYISTRGNYGKLHTVFLREGYKRGELVEPNDVYLARRRLAELVLMSPRKAKVDAELVRYRDGLDDEDDVE.

Residues 47–386 enclose the PORR domain; sequence VRDHGYDNYM…RLAELVLMSP (340 aa).

As to expression, expressed in roots, hypocotyls, cotyledons and shoot apex.

Involved in pre-arranging the maintenance of the active cell proliferation during root primordium development. Does not seem to be involved in cell cycle progression. This is Protein ROOT PRIMORDIUM DEFECTIVE 1 (RPD1) from Arabidopsis thaliana (Mouse-ear cress).